The chain runs to 388 residues: Large ribosomal subunit protein uL3A (388 aa).

Positions 1 to 10 (MSHCKFEQPR) are enriched in basic and acidic residues. The tract at residues 1 to 34 (MSHCKFEQPRHGSLGFLPRKRASRQRGKVKAFPK) is disordered. Phosphoserine is present on Ser-13. Basic residues predominate over residues 18-31 (PRKRASRQRGKVKA). Phosphoserine occurs at positions 65, 140, 143, 207, 295, and 355. Thr-372 is subject to Phosphothreonine.

The protein belongs to the universal ribosomal protein uL3 family. As to quaternary structure, component of the large ribosomal subunit (LSU). Mature yeast ribosomes consist of a small (40S) and a large (60S) subunit. The 40S small subunit contains 1 molecule of ribosomal RNA (18S rRNA) and at least 33 different proteins. The large 60S subunit contains 3 rRNA molecules (25S, 5.8S and 5S rRNA) and at least 46 different proteins. uL3 forms together with ES39L one of the contact sites for the signal recognition particle that targets ribosomes to the endoplasmic reticulum membrane.

It is found in the cytoplasm. Component of the ribosome, a large ribonucleoprotein complex responsible for the synthesis of proteins in the cell. The small ribosomal subunit (SSU) binds messenger RNAs (mRNAs) and translates the encoded message by selecting cognate aminoacyl-transfer RNA (tRNA) molecules. The large subunit (LSU) contains the ribosomal catalytic site termed the peptidyl transferase center (PTC), which catalyzes the formation of peptide bonds, thereby polymerizing the amino acids delivered by tRNAs into a polypeptide chain. The nascent polypeptides leave the ribosome through a tunnel in the LSU and interact with protein factors that function in enzymatic processing, targeting, and the membrane insertion of nascent chains at the exit of the ribosomal tunnel. uL3 plays a role in coordinating processes of accommodating the aminoacyl-tRNA in the PTC. In Schizosaccharomyces pombe (strain 972 / ATCC 24843) (Fission yeast), this protein is Large ribosomal subunit protein uL3A (rpl301).